A 492-amino-acid polypeptide reads, in one-letter code: GDP-Man:Man(3)GlcNAc(2)-PP-Dol alpha-1,2-mannosyltransferase (492 aa).

Residues 1-19 lie on the Lumenal side of the membrane; sequence MAADTGSWCVYAVLRFFYS. Residues 20–40 traverse the membrane as a helical segment; sequence LFFPGLMICGVLCVYLVIGLW. Topologically, residues 41 to 233 are cytoplasmic; sequence VIRWHLQRKK…SRNALLSKAK (193 aa). The helical intramembrane region spans 234 to 254; sequence LIYYYLFAFVYGLVGSCSDIV. The Cytoplasmic portion of the chain corresponds to 255–399; that stretch reads MVNSSWTLNH…IGLHTMWNEH (145 aa). The helical intramembrane region spans 400–420; it reads FGIGVVECMAAGTVILAHNSG. The Cytoplasmic segment spans residues 421-492; the sequence is GPKLDIVIPH…FLCSMEKLLT (72 aa).

The protein belongs to the glycosyltransferase group 1 family. Glycosyltransferase 4 subfamily.

It is found in the endoplasmic reticulum membrane. It catalyses the reaction an alpha-D-Man-(1-&gt;3)-[alpha-D-Man-(1-&gt;6)]-beta-D-Man-(1-&gt;4)-beta-D-GlcNAc-(1-&gt;4)-alpha-D-GlcNAc-diphospho-di-trans,poly-cis-dolichol + 2 GDP-alpha-D-mannose = an alpha-D-Man-(1-&gt;2)-alpha-D-Man-(1-&gt;2)-alpha-D-Man-(1-&gt;3)-[alpha-D-Man-(1-&gt;6)]-beta-D-Man-(1-&gt;4)-beta-D-GlcNAc-(1-&gt;4)-alpha-D-GlcNAc-diphospho-di-trans,poly-cis-dolichol + 2 GDP + 2 H(+). It functions in the pathway protein modification; protein glycosylation. GDP-Man:Man(3)GlcNAc(2)-PP-Dol alpha-1,2-mannosyltransferase that operates in the biosynthetic pathway of dolichol-linked oligosaccharides, the glycan precursors employed in protein asparagine (N)-glycosylation. The assembly of dolichol-linked oligosaccharides begins on the cytosolic side of the endoplasmic reticulum membrane and finishes in its lumen. The sequential addition of sugars to dolichol pyrophosphate produces dolichol-linked oligosaccharides containing fourteen sugars, including two GlcNAcs, nine mannoses and three glucoses. Once assembled, the oligosaccharide is transferred from the lipid to nascent proteins by oligosaccharyltransferases. Catalyzes, on the cytoplasmic face of the endoplasmic reticulum, the addition of the fourth and fifth mannose residues to the dolichol-linked oligosaccharide chain, to produce Man(5)GlcNAc(2)-PP-dolichol core oligosaccharide. Man(5)GlcNAc(2)-PP-dolichol is a substrate for ALG3, the following enzyme in the biosynthetic pathway. In Mus musculus (Mouse), this protein is GDP-Man:Man(3)GlcNAc(2)-PP-Dol alpha-1,2-mannosyltransferase.